Here is a 258-residue protein sequence, read N- to C-terminus: Hydroxyacylglutathione hydrolase (258 aa).

The Zn(2+) site is built by His-56, His-58, Asp-60, His-61, His-112, Asp-132, and His-170.

It belongs to the metallo-beta-lactamase superfamily. Glyoxalase II family. Monomer. Requires Zn(2+) as cofactor.

The enzyme catalyses an S-(2-hydroxyacyl)glutathione + H2O = a 2-hydroxy carboxylate + glutathione + H(+). It participates in secondary metabolite metabolism; methylglyoxal degradation; (R)-lactate from methylglyoxal: step 2/2. In terms of biological role, thiolesterase that catalyzes the hydrolysis of S-D-lactoyl-glutathione to form glutathione and D-lactic acid. The chain is Hydroxyacylglutathione hydrolase from Pseudomonas paraeruginosa (strain DSM 24068 / PA7) (Pseudomonas aeruginosa (strain PA7)).